A 238-amino-acid polypeptide reads, in one-letter code: Pyridoxine 5'-phosphate synthase (238 aa).

Position 7 (N7) interacts with 3-amino-2-oxopropyl phosphate. 9–10 (DH) contacts 1-deoxy-D-xylulose 5-phosphate. Residue R18 participates in 3-amino-2-oxopropyl phosphate binding. H43 serves as the catalytic Proton acceptor. 1-deoxy-D-xylulose 5-phosphate-binding residues include R45 and H50. The Proton acceptor role is filled by E70. T100 provides a ligand contact to 1-deoxy-D-xylulose 5-phosphate. H191 (proton donor) is an active-site residue. Residues G192 and 213–214 (GH) each bind 3-amino-2-oxopropyl phosphate.

The protein belongs to the PNP synthase family. In terms of assembly, homooctamer; tetramer of dimers.

The protein resides in the cytoplasm. The catalysed reaction is 3-amino-2-oxopropyl phosphate + 1-deoxy-D-xylulose 5-phosphate = pyridoxine 5'-phosphate + phosphate + 2 H2O + H(+). It functions in the pathway cofactor biosynthesis; pyridoxine 5'-phosphate biosynthesis; pyridoxine 5'-phosphate from D-erythrose 4-phosphate: step 5/5. In terms of biological role, catalyzes the complicated ring closure reaction between the two acyclic compounds 1-deoxy-D-xylulose-5-phosphate (DXP) and 3-amino-2-oxopropyl phosphate (1-amino-acetone-3-phosphate or AAP) to form pyridoxine 5'-phosphate (PNP) and inorganic phosphate. This is Pyridoxine 5'-phosphate synthase from Thermosynechococcus vestitus (strain NIES-2133 / IAM M-273 / BP-1).